Reading from the N-terminus, the 218-residue chain is Adenylate kinase (218 aa).

Residue 10 to 15 (GAGKGT) coordinates ATP. Residues 30–59 (STGDMFRAAMANQTEMGRLAKSFIDKGELV) form an NMP region. Residues threonine 31, arginine 36, 57-59 (ELV), 86-89 (GYPR), and glutamine 93 each bind AMP. The tract at residues 127-165 (GRFICRSCGSTYHKVFNPTKVEGTCDVCGGHEFFQREDD) is LID. Arginine 128 lines the ATP pocket. Zn(2+) is bound by residues cysteine 131 and cysteine 134. Position 137–138 (137–138 (TY)) interacts with ATP. Residues cysteine 151 and cysteine 154 each coordinate Zn(2+). Positions 162 and 173 each coordinate AMP. Position 201 (glutamine 201) interacts with ATP.

The protein belongs to the adenylate kinase family. In terms of assembly, monomer.

It localises to the cytoplasm. The enzyme catalyses AMP + ATP = 2 ADP. The protein operates within purine metabolism; AMP biosynthesis via salvage pathway; AMP from ADP: step 1/1. Functionally, catalyzes the reversible transfer of the terminal phosphate group between ATP and AMP. Plays an important role in cellular energy homeostasis and in adenine nucleotide metabolism. The sequence is that of Adenylate kinase from Streptococcus thermophilus (strain CNRZ 1066).